The primary structure comprises 338 residues: Large ribosomal subunit protein uL10 (338 aa).

Positions 297–338 (PSAQQTQTQQSTAEEKKEEKKEEEKKGPSEEEIGSGLASLFG) are disordered. Over residues 298–308 (SAQQTQTQQST) the composition is skewed to low complexity. The span at 309 to 325 (AEEKKEEKKEEEKKGPS) shows a compositional bias: basic and acidic residues.

The protein belongs to the universal ribosomal protein uL10 family. Part of the 50S ribosomal subunit. Forms part of the ribosomal stalk which helps the ribosome interact with GTP-bound translation factors. Forms a heptameric L10(L12)2(L12)2(L12)2 complex, where L10 forms an elongated spine to which the L12 dimers bind in a sequential fashion.

Its function is as follows. Forms part of the ribosomal stalk, playing a central role in the interaction of the ribosome with GTP-bound translation factors. This is Large ribosomal subunit protein uL10 from Saccharolobus islandicus (strain M.14.25 / Kamchatka #1) (Sulfolobus islandicus).